The chain runs to 561 residues: Putative transport protein YbjL (561 aa).

5 consecutive transmembrane segments (helical) span residues 8–28, 32–52, 66–86, 94–114, and 158–178; these read LLNGNYILLLFVVLALGLCLG, LGSIQLGNSIGVLVVSLLLGQ, FMLFIFCVGVEAGPNFFSIFF, MLALVMVGSALVIALGLGKLF, and NLSLGYALTYLIGLVSLIVGA. 2 RCK C-terminal domains span residues 200 to 288 and 292 to 373; these read RGLD…SFRN and VFDR…RIGF. 5 helical membrane-spanning segments follow: residues 383 to 403, 406 to 426, 451 to 471, 475 to 495, and 540 to 560; these read LLAFCAFFVIGLMIGMITFQF, FSFGMGNAAGLLFAGIMLGFM, VFMAGVGLSAGSGINNGLGAI, MLIAGLIVSLVPVVICFLFGA, and AIANVLLTLAGTIIVMVWPGL.

The protein belongs to the AAE transporter (TC 2.A.81) family. YbjL subfamily.

The protein resides in the cell membrane. In Escherichia coli O127:H6 (strain E2348/69 / EPEC), this protein is Putative transport protein YbjL.